We begin with the raw amino-acid sequence, 262 residues long: Rhomboid-type serine protease 2 (262 aa).

The Cytoplasmic segment spans residues 1 to 16 (MNWKSYVFPGGHPPAA). Residues 17–37 (LTTGLVVFLTAIYLLSFIFAL) form a helical membrane-spanning segment. Residues 38-57 (REDLSLAPESLFKLQMSRLS) lie on the Lumenal side of the membrane. The chain crosses the membrane as a helical span at residues 58-78 (LYPLIHLSLPHLLFNVLAIWA). Topologically, residues 79–89 (PLNLFEETHGT) are cytoplasmic. Residues 90-110 (VYTGVFLNLSALFAGILYCLL) traverse the membrane as a helical segment. The Lumenal segment spans residues 111-112 (GK). Residues 113 to 133 (LLYPEALVAGASGWCFTLFAY) form a helical membrane-spanning segment. Residue serine 124 is the Nucleophile of the active site. The Cytoplasmic segment spans residues 134–151 (YSFKESQIRPRTRIFRTD). Residues 152 to 168 (YSIPTLYTPLVLLVAIA) form a helical membrane-spanning segment. Residues 169–174 (VVIPGS) are Lumenal-facing. The chain crosses the membrane as a helical span at residues 175 to 191 (SFWGHFFGLCVGYAIGY). Histidine 179 is an active-site residue. Residues 192-262 (KESWFNKITP…DNSGTVLGTA (71 aa)) are Cytoplasmic-facing. A disordered region spans residues 243–262 (STETPLPLHNDNSGTVLGTA). Over residues 252–262 (NDNSGTVLGTA) the composition is skewed to polar residues.

This sequence belongs to the peptidase S54 family. In terms of assembly, interacts with SNX3.

It is found in the golgi apparatus membrane. Its subcellular location is the golgi apparatus. The protein localises to the cis-Golgi network membrane. It carries out the reaction Cleaves type-1 transmembrane domains using a catalytic dyad composed of serine and histidine that are contributed by different transmembrane domains.. Probable rhomboid-type serine protease that catalyzes intramembrane proteolysis. In Saccharomyces cerevisiae (strain ATCC 204508 / S288c) (Baker's yeast), this protein is Rhomboid-type serine protease 2 (RBD2).